We begin with the raw amino-acid sequence, 1219 residues long: MESSSPSSAEFDVFLSFRGFDTRNNFTGHLQKALRLRGIDSFIDDRLRRGDNLTALFDRIEKSKIAIIVFSTNYANSAWCLRELVKILECRNSNQQLVVPIFYKVDKSDVEKQRNSFAVPFKLPELTFPGVTPEEISSWKAALASASNILGYVVKEISTSEAKLVDEIAVDTFKKLNDLAPSGNEGLVGIESRLKNLEKLLSWEDLDTVHIIGIVGMVGIGKTTLADCLYGRMRGQFDGSCFLTNIRENSGRSGLESLLQKLFSTVLNDRDLEIGAPGNAHERFERRLKSKRLLIVLDDVNDEKQIRYLMGHCKWYQGGSRIIITTRDSKLIETIKGRKYVLPKLNDREALKLFSLNAFSNSFPLKEFEGLTNMVLDYAKGHPLALKVLGSDLCERDDLYWEAKLDRLKSRSHGDIYEVLETSYEELTTEQKNVFLDIACFFRSENVDYVTSLLNSHGVDVSGVVKDLVDKCLITLSDNRIEMHDMLQTMAKEISLKVETIGIRDCRWLSRHGNQCQWHIRLWDSEDICDLLTEGLGTDKIRGIFLDTSKLRAMRLSAKAFQGMYNLKYLKIYDSHCSRGCEAEFKLHLRRGLSFLPNELTYLHWHGYPLQSIPLDFDPKNLVDLKLPHSQLEEIWDDEKDVGMLKWVDLSHSINLRQCLGLANAHNLERLNLEGCTSLKKLPSTINCLEKLIYLNLRDCTSLRSLPKGIKTQSLQTLILSGCSSLKKFPLISENVEVLLLDGTVIKSLPESIQTFRRLALLNLKNCKKLKHLSSDLYKLKCLQELILSGCSQLEVFPEIKEDMESLEILLMDDTSITEMPKMMHLSNIKTFSLCGTSSHVSVSMFFMPPTLGCSRLTDLYLSRCSLYKLPDNIGGLSSLQSLCLSGNNIENLPESFNQLNNLKWFDLKFCKMLKSLPVLPQNLQYLDAHECESLETLANPLTPLTVGERIHSMFIFSNCYKLNQDAQASLVGHARIKSQLMANASAKRYYRGFVPEPLVGICYPATEIPSWFCHQRLGRSLEIPLPPHWCDINFVGLALSVVVSFKDYEDSAKRFSVKCCGNFENKDSSFTRFDFTLAGWNEPCGSLSHESRKLTSDHVFMGYNSCFLVKNVHGESNSCCYTKASFEFYVTDDETRKKIETCEVIKCGMSLMYVPEDDDCMLLKKTNIVQLSLKSGPSCSYDLDDVMDDVRPKRGLCQFVGGEEPGCKRRKEEKITVR.

Positions 9–176 constitute a TIR domain; that stretch reads AEFDVFLSFR…EIAVDTFKKL (168 aa). The active site involves glutamate 83. Residues 197–446 enclose the NB-ARC domain; sequence LEKLLSWEDL…DIACFFRSEN (250 aa). 216–222 contributes to the ATP binding site; that stretch reads GMVGIGK. 11 LRR repeats span residues 468 to 493, 538 to 563, 597 to 619, 620 to 642, 665 to 689, 690 to 713, 733 to 757, 759 to 780, 804 to 827, 854 to 877, and 878 to 899; these read LVDK…MAKE, TDKI…AFQG, PNEL…DFDP, KNLV…EKDV, AHNL…INCL, EKLI…IKTQ, SENV…QTFR, LALL…LYKL, MESL…MHLS, CSRL…IGGL, and SSLQ…SFNQ.

This sequence belongs to the disease resistance NB-LRR family. In terms of assembly, interacts with CAMTA3 and DSC2.

It catalyses the reaction NAD(+) + H2O = ADP-D-ribose + nicotinamide + H(+). Functionally, TIR-NB-LRR receptor-like protein involved in plant defense. Acts as a trigger of hypersensitive response (HR). Functions as a guard of CAMTA3, a negative regulator of immunity, during pathogen infection. This Arabidopsis thaliana (Mouse-ear cress) protein is Disease resistance-like protein DSC1.